A 37-amino-acid polypeptide reads, in one-letter code: Large ribosomal subunit protein bL36 (37 aa).

Belongs to the bacterial ribosomal protein bL36 family.

The sequence is that of Large ribosomal subunit protein bL36 from Geobacter metallireducens (strain ATCC 53774 / DSM 7210 / GS-15).